The primary structure comprises 248 residues: GPN-loop GTPase PAB0955 (248 aa).

10-15 (GSGKTT) contacts GTP. The Gly-Pro-Asn (GPN)-loop; involved in dimer interface motif lies at 65–67 (GPN). GTP contacts are provided by residues 165–168 (NKVD) and Ala-224.

The protein belongs to the GPN-loop GTPase family. As to quaternary structure, homodimer. Interacts with DNA topoisomerase VI subunit B (top6B), DNA primase DnaG and RF-C.

Its function is as follows. Small GTPase that may be involved in genome maintenance. Has weak intrinsic GTPase activity but displays no ATPase activity. This chain is GPN-loop GTPase PAB0955, found in Pyrococcus abyssi (strain GE5 / Orsay).